The sequence spans 106 residues: Thiosulfate sulfurtransferase GlpE (106 aa).

In terms of domain architecture, Rhodanese spans 16 to 104 (REQGAVLVDV…WRTTYPQETV (89 aa)). Catalysis depends on C64, which acts as the Cysteine persulfide intermediate.

This sequence belongs to the GlpE family.

Its subcellular location is the cytoplasm. It carries out the reaction thiosulfate + hydrogen cyanide = thiocyanate + sulfite + 2 H(+). The enzyme catalyses thiosulfate + [thioredoxin]-dithiol = [thioredoxin]-disulfide + hydrogen sulfide + sulfite + 2 H(+). Transferase that catalyzes the transfer of sulfur from thiosulfate to thiophilic acceptors such as cyanide or dithiols. May function in a CysM-independent thiosulfate assimilation pathway by catalyzing the conversion of thiosulfate to sulfite, which can then be used for L-cysteine biosynthesis. The protein is Thiosulfate sulfurtransferase GlpE of Pseudomonas syringae pv. syringae (strain B728a).